Reading from the N-terminus, the 266-residue chain is Glutamate racemase (266 aa).

Substrate contacts are provided by residues 9 to 10 (DS) and 41 to 42 (YG). The active-site Proton donor/acceptor is the C73. 74-75 (NT) lines the substrate pocket. Residue C183 is the Proton donor/acceptor of the active site. Residue 184-185 (TH) participates in substrate binding.

It belongs to the aspartate/glutamate racemases family.

The catalysed reaction is L-glutamate = D-glutamate. It participates in cell wall biogenesis; peptidoglycan biosynthesis. In terms of biological role, provides the (R)-glutamate required for cell wall biosynthesis. The sequence is that of Glutamate racemase from Shewanella woodyi (strain ATCC 51908 / MS32).